The chain runs to 605 residues: Alpha-amylase (605 aa).

An N-terminal signal peptide occupies residues 1–33 (MGVRRSLAALLAALLGCATSLVALTVAASPAHA). Residues Asn-130 and Asp-189 each contribute to the Ca(2+) site. The Nucleophile role is filled by Asp-219. His-223 is a binding site for Ca(2+). The active-site Proton donor is Glu-253. The region spanning 500-605 (GDDCTTVTAR…CSQNFYDSWR (106 aa)) is the CBM20 domain.

Belongs to the glycosyl hydrolase 13 family. Monomer. The cofactor is Ca(2+).

The enzyme catalyses Endohydrolysis of (1-&gt;4)-alpha-D-glucosidic linkages in polysaccharides containing three or more (1-&gt;4)-alpha-linked D-glucose units.. The polypeptide is Alpha-amylase (tam) (Thermomonospora curvata).